A 373-amino-acid chain; its full sequence is Malate dehydrogenase, mitochondrial (373 aa).

Residues 69 to 75 (GAAGGIG) and Asp95 each bind NAD(+). Positions 141 and 147 each coordinate substrate. NAD(+) is bound by residues Asn154 and 177 to 179 (ISN). The substrate site is built by Asn179 and Arg213. His237 functions as the Proton acceptor in the catalytic mechanism. Met288 lines the NAD(+) pocket.

This sequence belongs to the LDH/MDH superfamily. MDH type 1 family. In terms of assembly, homodimer.

It localises to the mitochondrion matrix. It carries out the reaction (S)-malate + NAD(+) = oxaloacetate + NADH + H(+). The polypeptide is Malate dehydrogenase, mitochondrial (Chlamydomonas reinhardtii (Chlamydomonas smithii)).